Consider the following 167-residue polypeptide: SsrA-binding protein (167 aa).

The span at 139-158 (QNHDKRDAAKDRDWQRDKQR) shows a compositional bias: basic and acidic residues. A disordered region spans residues 139–167 (QNHDKRDAAKDRDWQRDKQRVMRRHNRDA).

Belongs to the SmpB family.

Its subcellular location is the cytoplasm. Functionally, required for rescue of stalled ribosomes mediated by trans-translation. Binds to transfer-messenger RNA (tmRNA), required for stable association of tmRNA with ribosomes. tmRNA and SmpB together mimic tRNA shape, replacing the anticodon stem-loop with SmpB. tmRNA is encoded by the ssrA gene; the 2 termini fold to resemble tRNA(Ala) and it encodes a 'tag peptide', a short internal open reading frame. During trans-translation Ala-aminoacylated tmRNA acts like a tRNA, entering the A-site of stalled ribosomes, displacing the stalled mRNA. The ribosome then switches to translate the ORF on the tmRNA; the nascent peptide is terminated with the 'tag peptide' encoded by the tmRNA and targeted for degradation. The ribosome is freed to recommence translation, which seems to be the essential function of trans-translation. This Xanthomonas axonopodis pv. citri (strain 306) protein is SsrA-binding protein.